A 184-amino-acid chain; its full sequence is Small ribosomal subunit protein uS4c (184 aa).

The S4 RNA-binding domain maps to 82 to 143; sequence MRLDNILFRL…KQRSKALIQN (62 aa).

The protein belongs to the universal ribosomal protein uS4 family. In terms of assembly, part of the 30S ribosomal subunit. Contacts protein S5. The interaction surface between S4 and S5 is involved in control of translational fidelity.

The protein resides in the plastid. The protein localises to the chloroplast. One of the primary rRNA binding proteins, it binds directly to 16S rRNA where it nucleates assembly of the body of the 30S subunit. Functionally, with S5 and S12 plays an important role in translational accuracy. In Patersonia fragilis (Short purple-flag), this protein is Small ribosomal subunit protein uS4c (rps4).